Reading from the N-terminus, the 117-residue chain is MIIKQSSNVLRKKRHLRLRKIIIGTITRPRLNIFRSNKFIYVQLIDDNAQNTLCSVHSKETNVIGSNIKAAQAVGTLIAQKALALGIKNIVFDRSGYLYHGKIKALAEACRQSGLQF.

It belongs to the universal ribosomal protein uL18 family. Part of the 50S ribosomal subunit; part of the 5S rRNA/L5/L18/L25 subcomplex. Contacts the 5S and 23S rRNAs.

Its function is as follows. This is one of the proteins that bind and probably mediate the attachment of the 5S RNA into the large ribosomal subunit, where it forms part of the central protuberance. This chain is Large ribosomal subunit protein uL18, found in Phytoplasma australiense.